Consider the following 186-residue polypeptide: Potassium-transporting ATPase KdpC subunit (186 aa).

Residues 10 to 30 (LTIITMVLCGFLFPLAITLIG) form a helical membrane-spanning segment.

It belongs to the KdpC family. In terms of assembly, the system is composed of three essential subunits: KdpA, KdpB and KdpC.

The protein resides in the cell membrane. Part of the high-affinity ATP-driven potassium transport (or Kdp) system, which catalyzes the hydrolysis of ATP coupled with the electrogenic transport of potassium into the cytoplasm. This subunit acts as a catalytic chaperone that increases the ATP-binding affinity of the ATP-hydrolyzing subunit KdpB by the formation of a transient KdpB/KdpC/ATP ternary complex. The polypeptide is Potassium-transporting ATPase KdpC subunit (Staphylococcus aureus (strain MRSA252)).